A 270-amino-acid polypeptide reads, in one-letter code: uncharacterized protein (270 aa).

It is found in the cytoplasm. This is an uncharacterized protein from Schizosaccharomyces pombe (strain 972 / ATCC 24843) (Fission yeast).